Reading from the N-terminus, the 305-residue chain is tRNA pseudouridine synthase B (305 aa).

Catalysis depends on Asp48, which acts as the Nucleophile.

The protein belongs to the pseudouridine synthase TruB family. Type 1 subfamily.

It carries out the reaction uridine(55) in tRNA = pseudouridine(55) in tRNA. Its function is as follows. Responsible for synthesis of pseudouridine from uracil-55 in the psi GC loop of transfer RNAs. In Pseudomonas fluorescens (strain ATCC BAA-477 / NRRL B-23932 / Pf-5), this protein is tRNA pseudouridine synthase B.